Here is a 98-residue protein sequence, read N- to C-terminus: NADH-ubiquinone oxidoreductase chain 4L (98 aa).

Helical transmembrane passes span 1 to 21 (MSLT…GLLM), 29 to 49 (SLLC…MTIL), and 61 to 81 (IILL…LVMV).

It belongs to the complex I subunit 4L family. In terms of assembly, core subunit of respiratory chain NADH dehydrogenase (Complex I) which is composed of 45 different subunits.

The protein localises to the mitochondrion inner membrane. It carries out the reaction a ubiquinone + NADH + 5 H(+)(in) = a ubiquinol + NAD(+) + 4 H(+)(out). Its function is as follows. Core subunit of the mitochondrial membrane respiratory chain NADH dehydrogenase (Complex I) which catalyzes electron transfer from NADH through the respiratory chain, using ubiquinone as an electron acceptor. Part of the enzyme membrane arm which is embedded in the lipid bilayer and involved in proton translocation. This is NADH-ubiquinone oxidoreductase chain 4L (MT-ND4L) from Chiroderma trinitatum (Little big-eyed bat).